The sequence spans 52 residues: Proteinase inhibitor PSI-1.2 (52 aa).

Disulfide bonds link Cys-3/Cys-32, Cys-7/Cys-28, Cys-16/Cys-38, and Cys-31/Cys-49.

Functionally, potent inhibitor of trypsin and a weaker inhibitor of chymotrypsin. It does not inhibit elastase and subtilisin DY. The chain is Proteinase inhibitor PSI-1.2 from Capsicum annuum (Capsicum pepper).